An 89-amino-acid polypeptide reads, in one-letter code: Small ribosomal subunit protein uS15 (89 aa).

The protein belongs to the universal ribosomal protein uS15 family. In terms of assembly, part of the 30S ribosomal subunit. Forms a bridge to the 50S subunit in the 70S ribosome, contacting the 23S rRNA.

One of the primary rRNA binding proteins, it binds directly to 16S rRNA where it helps nucleate assembly of the platform of the 30S subunit by binding and bridging several RNA helices of the 16S rRNA. Its function is as follows. Forms an intersubunit bridge (bridge B4) with the 23S rRNA of the 50S subunit in the ribosome. In Photorhabdus laumondii subsp. laumondii (strain DSM 15139 / CIP 105565 / TT01) (Photorhabdus luminescens subsp. laumondii), this protein is Small ribosomal subunit protein uS15.